A 624-amino-acid chain; its full sequence is Penicillin-binding protein 4 (624 aa).

The signal sequence occupies residues 1-21; it reads MTMLRKIIGWILLLCIIPLFA. E96 acts as the Proton donor; for transglycosylase activity in catalysis. The Acyl-ester intermediate; for transpeptidase activity role is filled by S388.

In the N-terminal section; belongs to the glycosyltransferase 51 family. The protein in the C-terminal section; belongs to the transpeptidase family. Post-translationally, the N-terminus is blocked.

The protein localises to the cell membrane. The catalysed reaction is [GlcNAc-(1-&gt;4)-Mur2Ac(oyl-L-Ala-gamma-D-Glu-L-Lys-D-Ala-D-Ala)](n)-di-trans,octa-cis-undecaprenyl diphosphate + beta-D-GlcNAc-(1-&gt;4)-Mur2Ac(oyl-L-Ala-gamma-D-Glu-L-Lys-D-Ala-D-Ala)-di-trans,octa-cis-undecaprenyl diphosphate = [GlcNAc-(1-&gt;4)-Mur2Ac(oyl-L-Ala-gamma-D-Glu-L-Lys-D-Ala-D-Ala)](n+1)-di-trans,octa-cis-undecaprenyl diphosphate + di-trans,octa-cis-undecaprenyl diphosphate + H(+). The enzyme catalyses Preferential cleavage: (Ac)2-L-Lys-D-Ala-|-D-Ala. Also transpeptidation of peptidyl-alanyl moieties that are N-acyl substituents of D-alanine.. Its function is as follows. Cell wall formation. Synthesis of cross-linked peptidoglycan from the lipid intermediates. The enzyme has a penicillin-insensitive transglycosylase N-terminal domain (formation of linear glycan strands) and a penicillin-sensitive transpeptidase C-terminal domain (cross-linking of the peptide subunits). Has a partially redundant function with PBP-2A (pbpA) during spore outgrowth. This chain is Penicillin-binding protein 4, found in Bacillus subtilis (strain 168).